The following is a 157-amino-acid chain: Multidrug resistance efflux pump SepA (157 aa).

4 consecutive transmembrane segments (helical) span residues 18-38, 63-83, 100-120, and 122-142; these read IVLFIFVLSGAIFLTFLGFGL, LLYYGSYIIFGYFIIFAVEHL, ATFHLISYTVATTLFYFIIHL, and YVYINIDFWVIMVIIGFLYVC.

The protein belongs to the multidrug resistance efflux pump SepA family.

The protein localises to the cell membrane. Involved in multidrug efflux. The sequence is that of Multidrug resistance efflux pump SepA (sepA) from Staphylococcus aureus (strain bovine RF122 / ET3-1).